The following is a 166-amino-acid chain: Interferon gamma (166 aa).

Residues 1–23 (MKYTSSFLALLLSVLLGFSGSYG) form the signal peptide. Gln24 carries the post-translational modification Pyrrolidone carboxylic acid. N-linked (GlcNAc...) asparagine glycosylation is found at Asn39 and Asn106.

It belongs to the type II (or gamma) interferon family. In terms of assembly, homodimer. Interacts with IFNGR1 (via extracellular domain); this interaction promotes IFNGR1 dimerization. As to expression, released primarily from activated T lymphocytes.

It localises to the secreted. In terms of biological role, type II interferon produced by immune cells such as T-cells and NK cells that plays crucial roles in antimicrobial, antiviral, and antitumor responses by activating effector immune cells and enhancing antigen presentation. Primarily signals through the JAK-STAT pathway after interaction with its receptor IFNGR1 to affect gene regulation. Upon IFNG binding, IFNGR1 intracellular domain opens out to allow association of downstream signaling components JAK2, JAK1 and STAT1, leading to STAT1 activation, nuclear translocation and transcription of IFNG-regulated genes. Many of the induced genes are transcription factors such as IRF1 that are able to further drive regulation of a next wave of transcription. Plays a role in class I antigen presentation pathway by inducing a replacement of catalytic proteasome subunits with immunoproteasome subunits. In turn, increases the quantity, quality, and repertoire of peptides for class I MHC loading. Increases the efficiency of peptide generation also by inducing the expression of activator PA28 that associates with the proteasome and alters its proteolytic cleavage preference. Up-regulates as well MHC II complexes on the cell surface by promoting expression of several key molecules such as cathepsins B/CTSB, H/CTSH, and L/CTSL. Participates in the regulation of hematopoietic stem cells during development and under homeostatic conditions by affecting their development, quiescence, and differentiation. This is Interferon gamma (IFNG) from Capra hircus (Goat).